A 156-amino-acid chain; its full sequence is Small ribosomal subunit protein uS7 (156 aa).

It belongs to the universal ribosomal protein uS7 family. Part of the 30S ribosomal subunit. Contacts proteins S9 and S11.

Its function is as follows. One of the primary rRNA binding proteins, it binds directly to 16S rRNA where it nucleates assembly of the head domain of the 30S subunit. Is located at the subunit interface close to the decoding center, probably blocks exit of the E-site tRNA. In Arthrospira platensis (Spirulina platensis), this protein is Small ribosomal subunit protein uS7.